Consider the following 366-residue polypeptide: Ferredoxin--NADP reductase, leaf isozyme 2, chloroplastic (366 aa).

The N-terminal 48 residues, 1–48 (MAAVNTVSSLPCSKAGAAVAGGAPRPSTCSVFYPPRCWSKRSSGNGVR), are a transit peptide targeting the chloroplast. The region spanning 87-209 (KEPYTGRCLL…TGPVGKEMLM (123 aa)) is the FAD-binding FR-type domain. FAD-binding positions include 145-148 (RLYS), 166-168 (CVK), Y172, and 183-185 (VCS). 2 residues coordinate NADP(+): S148 and K168. Cysteines 184 and 189 form a disulfide. S185 bears the Phosphoserine mark. Position 216 is a phosphothreonine (T216). Position 224 (T224) interacts with FAD. Residues T224, 256 to 257 (VP), 286 to 287 (SR), K296, 325 to 326 (GL), and E364 contribute to the NADP(+) site.

The protein belongs to the ferredoxin--NADP reductase type 1 family. In terms of assembly, heterodimer with LFNR1. Component of high molecular weight thylakoid LFNRs-containing protein complexes containing LIR1, LFNR1, LFNR2, TIC62 and TROL proteins. Interacts directly with LIR1 and TIC62; LIR1 increases the affinity of LFNR1 and LFNR2 for TIC62. FAD serves as cofactor. May form interchain disulfide bonds with LIR1.

It localises to the plastid. Its subcellular location is the chloroplast stroma. The protein localises to the chloroplast thylakoid membrane. It catalyses the reaction 2 reduced [2Fe-2S]-[ferredoxin] + NADP(+) + H(+) = 2 oxidized [2Fe-2S]-[ferredoxin] + NADPH. Its pathway is energy metabolism; photosynthesis. Plays a key role in regulating the relative amounts of cyclic and non-cyclic electron flow to meet the demands of the plant for ATP and reducing power. The sequence is that of Ferredoxin--NADP reductase, leaf isozyme 2, chloroplastic from Oryza sativa subsp. japonica (Rice).